Here is a 202-residue protein sequence, read N- to C-terminus: Small ribosomal subunit protein uS4 (202 aa).

Residues 91–168 (SRLSSILYNS…HKVPDYLEVD (78 aa)) form the S4 RNA-binding domain.

The protein belongs to the universal ribosomal protein uS4 family. Part of the 30S ribosomal subunit. Contacts protein S5. The interaction surface between S4 and S5 is involved in control of translational fidelity.

Its function is as follows. One of the primary rRNA binding proteins, it binds directly to 16S rRNA where it nucleates assembly of the body of the 30S subunit. With S5 and S12 plays an important role in translational accuracy. In Ehrlichia canis (strain Jake), this protein is Small ribosomal subunit protein uS4.